We begin with the raw amino-acid sequence, 347 residues long: GMP reductase (347 aa).

An NADP(+)-binding site is contributed by 108 to 131 (ADFVKMQQILALSPGLKFICIDVA). Positions 181 and 183 each coordinate K(+). The active-site Thioimidate intermediate is the cysteine 186. 216–239 (IVSDGGCSVPGDVAKAFGGGADFV) contributes to the NADP(+) binding site.

It belongs to the IMPDH/GMPR family. GuaC type 1 subfamily. Homotetramer.

The enzyme catalyses IMP + NH4(+) + NADP(+) = GMP + NADPH + 2 H(+). In terms of biological role, catalyzes the irreversible NADPH-dependent deamination of GMP to IMP. It functions in the conversion of nucleobase, nucleoside and nucleotide derivatives of G to A nucleotides, and in maintaining the intracellular balance of A and G nucleotides. This chain is GMP reductase, found in Serratia proteamaculans (strain 568).